A 338-amino-acid polypeptide reads, in one-letter code: Ketol-acid reductoisomerase (NADP(+)) (338 aa).

The KARI N-terminal Rossmann domain maps to 1–181 (MKIYYDKDCN…GGGKAGIIET (181 aa)). NADP(+)-binding positions include 24–27 (YGSQ), Lys47, Ser50, Ser52, and 82–85 (DEIQ). His107 is a catalytic residue. Gly133 is a binding site for NADP(+). The region spanning 182–327 (SFKEETETDL…ARLRSMMAWI (146 aa)) is the KARI C-terminal knotted domain. Residues Asp190, Glu194, Glu226, and Glu230 each contribute to the Mg(2+) site. Residue Ser251 coordinates substrate.

Belongs to the ketol-acid reductoisomerase family. The cofactor is Mg(2+).

It carries out the reaction (2R)-2,3-dihydroxy-3-methylbutanoate + NADP(+) = (2S)-2-acetolactate + NADPH + H(+). The enzyme catalyses (2R,3R)-2,3-dihydroxy-3-methylpentanoate + NADP(+) = (S)-2-ethyl-2-hydroxy-3-oxobutanoate + NADPH + H(+). It participates in amino-acid biosynthesis; L-isoleucine biosynthesis; L-isoleucine from 2-oxobutanoate: step 2/4. Its pathway is amino-acid biosynthesis; L-valine biosynthesis; L-valine from pyruvate: step 2/4. Functionally, involved in the biosynthesis of branched-chain amino acids (BCAA). Catalyzes an alkyl-migration followed by a ketol-acid reduction of (S)-2-acetolactate (S2AL) to yield (R)-2,3-dihydroxy-isovalerate. In the isomerase reaction, S2AL is rearranged via a Mg-dependent methyl migration to produce 3-hydroxy-3-methyl-2-ketobutyrate (HMKB). In the reductase reaction, this 2-ketoacid undergoes a metal-dependent reduction by NADPH to yield (R)-2,3-dihydroxy-isovalerate. This is Ketol-acid reductoisomerase (NADP(+)) from Geotalea uraniireducens (strain Rf4) (Geobacter uraniireducens).